The primary structure comprises 469 residues: Argininosuccinate lyase (469 aa).

This sequence belongs to the lyase 1 family. Argininosuccinate lyase subfamily.

The protein resides in the cytoplasm. The catalysed reaction is 2-(N(omega)-L-arginino)succinate = fumarate + L-arginine. It functions in the pathway amino-acid biosynthesis; L-arginine biosynthesis; L-arginine from L-ornithine and carbamoyl phosphate: step 3/3. In Burkholderia cenocepacia (strain HI2424), this protein is Argininosuccinate lyase.